Consider the following 343-residue polypeptide: Tetraacyldisaccharide 4'-kinase (343 aa).

Position 51-58 (51-58 (TVGGAGKT)) interacts with ATP.

It belongs to the LpxK family.

The enzyme catalyses a lipid A disaccharide + ATP = a lipid IVA + ADP + H(+). The protein operates within glycolipid biosynthesis; lipid IV(A) biosynthesis; lipid IV(A) from (3R)-3-hydroxytetradecanoyl-[acyl-carrier-protein] and UDP-N-acetyl-alpha-D-glucosamine: step 6/6. Transfers the gamma-phosphate of ATP to the 4'-position of a tetraacyldisaccharide 1-phosphate intermediate (termed DS-1-P) to form tetraacyldisaccharide 1,4'-bis-phosphate (lipid IVA). The polypeptide is Tetraacyldisaccharide 4'-kinase (Xanthobacter autotrophicus (strain ATCC BAA-1158 / Py2)).